We begin with the raw amino-acid sequence, 1466 residues long: Collagen alpha-1(III) chain (1466 aa).

Residues 1–23 form the signal peptide; the sequence is MMSFVQKGSWLLLALLHPTIILA. Positions 24-153 are cleaved as a propeptide — N-terminal propeptide; that stretch reads QQEAVEGGCS…CPTGPQNYSP (130 aa). Residues 30 to 89 enclose the VWFC domain; that stretch reads GGCSHLGQSYADRDVWKPEPCQICVCDSGSVLCDDIICDDQELDCPNPEIPFGECCAVCP. Positions 95 to 1194 are disordered; that stretch reads PTRPPNGQGP…GPPGPPGAPG (1100 aa). Positions 99-108 are enriched in low complexity; it reads PNGQGPQGPK. The span at 146–155 shows a compositional bias: polar residues; that stretch reads TGPQNYSPQY. The nonhelical region (N-terminal) stretch occupies residues 149–167; sequence QNYSPQYDSYDVKSGVAVG. Residues 168 to 1196 form a triple-helical region region; sequence GLAGYPGPAG…PGPPGAPGPC (1029 aa). 4-hydroxyproline is present on residues P173, P179, P182, P185, P191, P194, P197, P203, P206, P215, P218, P236, P239, P245, P248, P257, and P260. The segment covering 175–185 has biased composition (pro residues); that stretch reads PAGPPGPPGPP. The span at 187-199 shows a compositional bias: low complexity; that stretch reads TSGHPGSPGSPGY. The span at 229–241 shows a compositional bias: basic and acidic residues; sequence KDGESGRPGRPGE. Residues 251–260 show a composition bias toward low complexity; it reads KGPAGIPGFP. K263 carries the post-translational modification 5-hydroxylysine; alternate. O-linked (Gal...) hydroxylysine; alternate glycosylation occurs at K263. A compositionally biased stretch (basic and acidic residues) spans 266 to 277; that stretch reads RGFDGRNGEKGE. P281 is subject to 4-hydroxyproline. The residue at position 284 (K284) is a 5-hydroxylysine. A 4-hydroxyproline mark is found at P290, P296, P305, P311, P314, P332, P335, P338, P344, P347, P359, P365, P371, P383, P386, P392, P404, P407, P416, P425, P434, P443, P455, P458, P470, P473, P479, P488, P500, P512, P524, P530, P533, P539, P542, P545, P551, P554, P563, P566, P575, P581, P590, P599, P602, P608, P620, P635, P644, P650, P656, P659, P661, P668, P671, P680, P686, P692, P701, P703, P713, P716, P722, P728, P737, P746, P749, P755, P770, P776, P785, P788, P797, P806, P812, P815, P821, P830, P839, P845, and P854. Residues 311 to 322 are compositionally biased toward low complexity; it reads PGLPGAAGARGN. Low complexity predominate over residues 355–380; sequence PAGSPGSNGAPGQRGEPGPQGHAGAQ. Residues 390-399 show a composition bias toward gly residues; the sequence is GSPGGKGEMG. The span at 404–425 shows a compositional bias: low complexity; sequence PGAPGLMGARGPPGPAGANGAP. The segment covering 426-435 has biased composition (gly residues); that stretch reads GLRGGAGEPG. Residues 478 to 523 are compositionally biased toward low complexity; the sequence is LPGAAGERGAPGFRGPAGPNGIPGEKGPAGERGAPGPAGPRGAAGE. Over residues 528–549 the composition is skewed to gly residues; it reads GVPGGPGMRGMPGSPGGPGSDG. The span at 642–651 shows a compositional bias: gly residues; the sequence is GLPGTGGPPG. A compositionally biased stretch (gly residues) spans 669-678; that stretch reads GAPGGKGDAG. Residues 679 to 692 show a composition bias toward low complexity; sequence APGERGPPGLAGAP. Positions 693 to 711 are enriched in gly residues; that stretch reads GLRGGAGPPGPEGGKGAAG. The span at 729–738 shows a compositional bias: gly residues; sequence GERGGLGSPG. Low complexity predominate over residues 787–796; that stretch reads LPGIAGPRGS. A compositionally biased stretch (basic and acidic residues) spans 823 to 835; that stretch reads GKGERGAPGEKGE. Positions 836 to 850 are enriched in gly residues; the sequence is GGPPGVAGPPGGSGP. K860 is modified (5-hydroxylysine). A compositionally biased stretch (gly residues) spans 864–873; that stretch reads GSPGGPGAAG. 4-hydroxyproline occurs at positions 866, 869, 875, 881, 884, 890, 892, 899, 905, 914, 917, 929, 935, 941, and 944. Residues 890-907 are compositionally biased toward pro residues; that stretch reads PGPPGPSGSPGKDGPPGP. Residues 908 to 917 show a composition bias toward low complexity; the sequence is AGNTGAPGSP. The span at 946–961 shows a compositional bias: low complexity; that stretch reads PLGIAGITGARGLAGP. A 4-hydroxyproline mark is found at P962, P965, and P971. 5-hydroxylysine is present on K977. Residues P983, P995, P1001, P1010, P1016, P1022, P1028, P1040, P1043, P1046, P1049, P1052, P1076, and P1085 each carry the 4-hydroxyproline modification. Residues 1046–1055 show a composition bias toward pro residues; it reads PGHPGPPGPV. Residues 1067-1085 show a composition bias toward low complexity; the sequence is SGPAGPAGAPGPAGSRGAP. Residue K1106 is modified to 5-hydroxylysine. 4-hydroxyproline is present on residues P1112, P1115, P1118, P1121, P1133, P1148, P1157, P1163, P1178, P1181, P1184, P1187, P1190, and P1193. The span at 1123-1133 shows a compositional bias: low complexity; that stretch reads PAGQQGAIGSP. Residues 1181–1193 are compositionally biased toward pro residues; sequence PGQPGPPGPPGAP. The segment at 1197–1205 is nonhelical region (C-terminal); that stretch reads CGGVGAAAI. Residues 1222–1466 constitute a propeptide, C-terminal propeptide; that stretch reads DEPMDFKINT…GVDVGPVCFL (245 aa). Residues 1232–1466 enclose the Fibrillar collagen NC1 domain; the sequence is DEIMTSLKSV…GVDVGPVCFL (235 aa). Disulfide bonds link C1262–C1294, C1302–C1464, and C1372–C1417. Ca(2+) contacts are provided by D1280, N1282, Q1283, C1285, and D1288.

The protein belongs to the fibrillar collagen family. In terms of assembly, trimers of identical alpha 1(III) chains. The chains are linked to each other by interchain disulfide bonds. Trimers are also cross-linked via hydroxylysines. Interacts with ADGRG1. Post-translationally, proline residues at the third position of the tripeptide repeating unit (G-X-Y) are hydroxylated in some or all of the chains. In terms of processing, O-linked glycan consists of a Glc-Gal disaccharide bound to the oxygen atom of a post-translationally added hydroxyl group.

It is found in the secreted. It localises to the extracellular space. The protein localises to the extracellular matrix. Its function is as follows. Collagen type III occurs in most soft connective tissues along with type I collagen. Involved in regulation of cortical development. Is the major ligand of ADGRG1 in the developing brain and binding to ADGRG1 inhibits neuronal migration and activates the RhoA pathway by coupling ADGRG1 to GNA13 and possibly GNA12. The protein is Collagen alpha-1(III) chain (COL3A1) of Homo sapiens (Human).